The following is a 495-amino-acid chain: Alkaline protease 2 (495 aa).

Residues 1–16 form the signal peptide; sequence MKGYLSLSILPLLVAA. A propeptide spanning residues 17–136 is cleaved from the precursor; it reads SPVVVDSIHN…IEKDSEVHTM (120 aa). Residues 43-136 enclose the Inhibitor I9 domain; sequence SYIVVFKKHV…IEKDSEVHTM (94 aa). Residues 146-452 form the Peptidase S8 domain; sequence PWGLARISHR…GGSSNYTDII (307 aa). Residues Asp182 and His214 each act as charge relay system in the active site. N-linked (GlcNAc...) asparagine glycosylation occurs at Asn284. Residue Ser380 is the Charge relay system of the active site. 2 N-linked (GlcNAc...) asparagine glycosylation sites follow: Asn447 and Asn460.

It belongs to the peptidase S8 family.

The catalysed reaction is Hydrolysis of proteins with broad specificity, and of Bz-Arg-OEt &gt; Ac-Tyr-OEt. Does not hydrolyze peptide amides.. Alkaline protease that allows assimilation of proteinaceous substrates. Acts as a significant virulence factor in invasive aspergillosis. Required for regular sporulation. This chain is Alkaline protease 2 (alp2), found in Aspergillus fumigatus (strain CBS 144.89 / FGSC A1163 / CEA10) (Neosartorya fumigata).